The following is a 274-amino-acid chain: Penicillin-insensitive murein endopeptidase (274 aa).

A signal peptide spans 1–19 (MKKTALALLALLVSSASLA). Intrachain disulfides connect cysteine 44/cysteine 265, cysteine 187/cysteine 235, and cysteine 216/cysteine 223. Zn(2+) contacts are provided by histidine 110, histidine 113, aspartate 120, aspartate 147, histidine 150, and histidine 211. The tract at residues 225–274 (DQPLPPPGDGCGAELQSWFEPPEPGTTKPEKKTPPPLPPSCQALLDEHVL) is disordered.

This sequence belongs to the peptidase M74 family. As to quaternary structure, dimer. Requires Zn(2+) as cofactor.

Its subcellular location is the periplasm. In terms of biological role, murein endopeptidase that cleaves the D-alanyl-meso-2,6-diamino-pimelyl amide bond that connects peptidoglycan strands. Likely plays a role in the removal of murein from the sacculus. This Citrobacter koseri (strain ATCC BAA-895 / CDC 4225-83 / SGSC4696) protein is Penicillin-insensitive murein endopeptidase.